The primary structure comprises 446 residues: ATP-dependent protease ATPase subunit HslU (446 aa).

ATP contacts are provided by residues Val17, 59 to 64 (GVGKTE), Asp255, Glu320, and Arg392.

This sequence belongs to the ClpX chaperone family. HslU subfamily. As to quaternary structure, a double ring-shaped homohexamer of HslV is capped on each side by a ring-shaped HslU homohexamer. The assembly of the HslU/HslV complex is dependent on binding of ATP.

Its subcellular location is the cytoplasm. Its function is as follows. ATPase subunit of a proteasome-like degradation complex; this subunit has chaperone activity. The binding of ATP and its subsequent hydrolysis by HslU are essential for unfolding of protein substrates subsequently hydrolyzed by HslV. HslU recognizes the N-terminal part of its protein substrates and unfolds these before they are guided to HslV for hydrolysis. This is ATP-dependent protease ATPase subunit HslU from Azotobacter vinelandii (strain DJ / ATCC BAA-1303).